The chain runs to 447 residues: Voltage-gated purine nucleotide uniporter SLC17A9 (447 aa).

A disordered region spans residues 1–26 (MPSQRSSLMQPIPEETRKTPSAAAED). The next 11 helical transmembrane spans lie at 40–60 (ILLL…VCTV), 74–94 (GIVL…GGHL), 103–123 (VILL…LLAH), 129–149 (LAFL…YFPA), 169–189 (TVGA…SVLL), 192–212 (CGWQ…AYYV), 252–272 (VWAA…LLSW), 287–307 (WVFN…SGFI), 327–347 (VMGL…TSFL), 380–400 (GFLF…GVCL), and 413–433 (CVFH…LVFG).

Belongs to the major facilitator superfamily. Sodium/anion cotransporter family. In terms of tissue distribution, in brain, specifically expressed in the medulla and is associated with chromaffin granules (at protein level). Predominantly expressed in adrenal gland, brain and thyroid.

The protein localises to the cytoplasmic vesicle. It localises to the secretory vesicle. It is found in the chromaffin granule membrane. Its subcellular location is the secretory vesicle membrane. The protein resides in the lysosome membrane. The enzyme catalyses ATP(in) = ATP(out). It carries out the reaction ADP(in) = ADP(out). The catalysed reaction is GTP(in) = GTP(out). Activity is chloride-dependent. Functionally, voltage-gated ATP nucleotide uniporter that can also transport the purine nucleotides ADP and GTP. Uses the membrane potential as the driving force to control ATP accumulation in lysosomes and secretory vesicles. By controlling ATP storage in lysosomes, regulates ATP-dependent proteins of these organelles. Also indirectly regulates the exocytosis of ATP through its import into lysosomes in astrocytes and secretory vesicles such as adrenal chromaffin granules, mucin granules and synaptic vesicles. The sequence is that of Voltage-gated purine nucleotide uniporter SLC17A9 from Mus musculus (Mouse).